A 770-amino-acid chain; its full sequence is Glutamate carboxypeptidase 2 homolog (770 aa).

Topologically, residues 1–19 (MPYVGVGAQKASTNLTGGP) are cytoplasmic. A helical; Signal-anchor for type II membrane protein membrane pass occupies residues 20 to 40 (MMKAYAFVLAFFLLGLGVLAL). Over 41 to 770 (GKHHSGRRFN…CVVNTLRDVI (730 aa)) the chain is Extracellular. Residues asparagine 175 and asparagine 337 are each glycosylated (N-linked (GlcNAc...) asparagine). Residues 282–597 (SKKELFKGRT…QYWAELAKTF (316 aa)) are catalytic. The Zn(2+) site is built by histidine 387 and aspartate 397. N-linked (GlcNAc...) asparagine glycosylation is present at asparagine 417. Glutamate 435 acts as the Nucleophile in catalysis. Glutamate 436 and aspartate 464 together coordinate Zn(2+). N-linked (GlcNAc...) asparagine glycans are attached at residues asparagine 469 and asparagine 551. Residue histidine 562 coordinates Zn(2+). N-linked (GlcNAc...) asparagine glycosylation is found at asparagine 606 and asparagine 630.

It belongs to the peptidase M28 family. M28B subfamily. Zn(2+) serves as cofactor.

It is found in the membrane. It catalyses the reaction Release of an unsubstituted, C-terminal glutamyl residue, typically from Ac-Asp-Glu or folylpoly-gamma-glutamates.. The protein is Glutamate carboxypeptidase 2 homolog of Caenorhabditis briggsae.